The primary structure comprises 444 residues: Xylose isomerase (444 aa).

Positions 307 and 309 each coordinate Mg(2+).

The protein belongs to the xylose isomerase family. Homotetramer. Mg(2+) is required as a cofactor.

The protein localises to the cytoplasm. The catalysed reaction is alpha-D-xylose = alpha-D-xylulofuranose. This is Xylose isomerase from Thermotoga neapolitana (strain ATCC 49049 / DSM 4359 / NBRC 107923 / NS-E).